The following is a 465-amino-acid chain: MSFLVAIVGRANVGKSTLFNVLTNSRDALVFDFEGVTRDRQYGQAKYDDLDYLVVDTGGISDKDVGFDEFMAKQSQIAIDEANLVFFVVDGRSGLTTGDEYVASLLRQKDKKVVVVVNKVDGTDEEAAMAEFYSFGFDKVFAISAAHRRNTQKLVDKFLKKPLNEYYQDYTQTQEHKEQQRHGIHFSLIGRPNVGKSTLTNRMLGEDRVVVFDMPGTTIDSVSIPFERHGQKYTIVDTAGVRKRGKVKQTLEKFSVIKTLQAIQDSNVVVAVVDARQGISDQDLSLIHFAIKNGRALVLAVNKWDGMTEEDRIQVKQDLKRKLFFLQDYVDIHFISALHGTNVGHVFESIDTAYACANKKITTADATRLMQLAVEAHSPPMVGKFRIKLKYAHVGGHNPPVIVIHGNQVSRLPNSYKRYLENFFREALDFRGTPIVFEFKQSENPFADRKNKRSKDEGSKSKKVK.

2 EngA-type G domains span residues 3–166 and 184–358; these read FLVA…LNEY and IHFS…ACAN. GTP is bound by residues 9–16, 56–60, 118–121, 190–197, 237–241, and 302–305; these read GRANVGKS, DTGGI, NKVD, GRPNVGKS, DTAGV, and NKWD. The 85-residue stretch at 359-443 folds into the KH-like domain; that stretch reads KKITTADATR…PIVFEFKQSE (85 aa). The segment at 446 to 465 is disordered; sequence FADRKNKRSKDEGSKSKKVK.

This sequence belongs to the TRAFAC class TrmE-Era-EngA-EngB-Septin-like GTPase superfamily. EngA (Der) GTPase family. Associates with the 50S ribosomal subunit.

Functionally, GTPase that plays an essential role in the late steps of ribosome biogenesis. This chain is GTPase Der, found in Francisella tularensis subsp. novicida (strain U112).